A 470-amino-acid chain; its full sequence is Syncoilin (470 aa).

The disordered stretch occupies residues 1–43 (MASPEPLRGGDGARASREPHTEASFPLQESESPKEAKTFNPEA). The head stretch occupies residues 1 to 148 (MASPEPLRGG…TEGSLPAQPI (148 aa)). Position 32 is a phosphoserine (serine 32). Positions 157–452 (SVEDLERLEA…AMLPKSLEQA (296 aa)) constitute an IF rod domain. The interval 158–192 (VEDLERLEARFQQCVQAVSQLEEERDQLIHELVLL) is coil 1A. Positions 193-219 (REPALQEVQQVHQDILAAYKLHAQAEL) are linker 1. Residues 220-297 (ERDGLREEIR…KEQLQQQLEA (78 aa)) form a coil 1b region. A linker 2 region spans residues 298–337 (PPTQSDGHFLQESRRLSTQFENLMAESRQGLEEEYEPQLL). Serine 314 bears the Phosphoserine mark. Residues 338-445 (RLLERKEAGT…EELSTYKAML (108 aa)) are coil 2. The tract at residues 446–470 (PKSLEQADAPTSQAGGVEAQSPGTV) is disordered. A tail region spans residues 446 to 470 (PKSLEQADAPTSQAGGVEAQSPGTV).

Belongs to the intermediate filament family. As to quaternary structure, may link the dystrophin-associated glycoprotein complex (DAPC) to intracellular desmin (DES) filaments. Interacts with DES and DTNA. In terms of tissue distribution, detected strongly in skeletal muscle and heart and weakly in lung (at protein level). Highly expressed in skeletal muscle and lung and weakly in lung and testis.

The protein localises to the cytoplasm. It is found in the perinuclear region. Functionally, atypical type III intermediate filament (IF) protein that may play a supportive role in the efficient coupling of mechanical stress between the myofibril and fiber exterior. May facilitate lateral force transmission during skeletal muscle contraction. Does not form homofilaments nor heterofilaments with other IF proteins. The polypeptide is Syncoilin (Sync) (Mus musculus (Mouse)).